Consider the following 609-residue polypeptide: Threonine--tRNA ligase (609 aa).

Residues 1 to 145 (MRLLLIHSDY…TIVPGAGAAV (145 aa)) are editing domain. Positions 194-485 (IHVDLMRSKE…TANQSVPQLP (292 aa)) are catalytic. Residues cysteine 286, histidine 338, and histidine 458 each coordinate Zn(2+).

This sequence belongs to the class-II aminoacyl-tRNA synthetase family. In terms of assembly, homodimer. It depends on Zn(2+) as a cofactor.

It localises to the cytoplasm. The enzyme catalyses tRNA(Thr) + L-threonine + ATP = L-threonyl-tRNA(Thr) + AMP + diphosphate + H(+). Its function is as follows. Catalyzes the attachment of threonine to tRNA(Thr) in a two-step reaction: L-threonine is first activated by ATP to form Thr-AMP and then transferred to the acceptor end of tRNA(Thr). Also edits incorrectly charged L-seryl-tRNA(Thr). The polypeptide is Threonine--tRNA ligase (Methanosphaerula palustris (strain ATCC BAA-1556 / DSM 19958 / E1-9c)).